A 612-amino-acid chain; its full sequence is Lysophospholipase (612 aa).

A signal peptide spans 1–9; it reads DITFAGVQR. The PLA2c domain occupies 24–571; the sequence is SCPASRPTVR…DRYCWNGTVN (548 aa). Residues Asn41, Asn81, Asn116, Asn150, Asn223, Asn267, Asn306, Asn335, Asn427, Asn440, Asn446, Asn477, Asn498, Asn526, Asn532, Asn567, and Asn571 are each glycosylated (N-linked (GlcNAc...) asparagine).

It belongs to the lysophospholipase family. N-glycosylated.

It is found in the secreted. It carries out the reaction a 1-acyl-sn-glycero-3-phosphocholine + H2O = sn-glycerol 3-phosphocholine + a fatty acid + H(+). In terms of biological role, catalyzes the release of fatty acids from lysophospholipids. This Penicillium chrysogenum (Penicillium notatum) protein is Lysophospholipase.